Reading from the N-terminus, the 552-residue chain is 2-methyl-1,2-propanediol dehydrogenase (552 aa).

Belongs to the GMC oxidoreductase family. FAD serves as cofactor.

Its subcellular location is the cytoplasm. It catalyses the reaction 2-methylpropane-1,2-diol + NAD(+) = 2-hydroxy-2-methylpropanal + NADH + H(+). In terms of biological role, involved in the degradation of methyl tert-butyl ether (MTBE). Catalyzes the conversion of 2-methyl 1,2-propanediol (2-M1,2-PD) to hydroxyisobutyraldehyde. This chain is 2-methyl-1,2-propanediol dehydrogenase, found in Mycolicibacterium austroafricanum (Mycobacterium austroafricanum).